We begin with the raw amino-acid sequence, 83 residues long: Exodeoxyribonuclease 7 small subunit (83 aa).

This sequence belongs to the XseB family. In terms of assembly, heterooligomer composed of large and small subunits.

It localises to the cytoplasm. The catalysed reaction is Exonucleolytic cleavage in either 5'- to 3'- or 3'- to 5'-direction to yield nucleoside 5'-phosphates.. Bidirectionally degrades single-stranded DNA into large acid-insoluble oligonucleotides, which are then degraded further into small acid-soluble oligonucleotides. This Bradyrhizobium sp. (strain BTAi1 / ATCC BAA-1182) protein is Exodeoxyribonuclease 7 small subunit.